Reading from the N-terminus, the 463-residue chain is Chromosomal replication initiator protein DnaA (463 aa).

Positions 1–84 are domain I, interacts with DnaA modulators; it reads MNTNQIILTN…QLFQHYNNAI (84 aa). The interval 84–124 is domain II; it reads IKTVEIITKELPASNQATLELPTKTFADIGSSELNSENIFS. The domain III, AAA+ region stretch occupies residues 125–343; the sequence is TFDIRFTFDN…GALNKVIAHS (219 aa). Positions 171, 173, 174, and 175 each coordinate ATP. The interval 344-463 is domain IV, binds dsDNA; that stretch reads NFTAKEITLE…INLMMKILQN (120 aa).

The protein belongs to the DnaA family. As to quaternary structure, oligomerizes as a right-handed, spiral filament on DNA at oriC.

The protein resides in the cytoplasm. Functionally, plays an essential role in the initiation and regulation of chromosomal replication. ATP-DnaA binds to the origin of replication (oriC) to initiate formation of the DNA replication initiation complex once per cell cycle. Binds the DnaA box (a 9 base pair repeat at the origin) and separates the double-stranded (ds)DNA. Forms a right-handed helical filament on oriC DNA; dsDNA binds to the exterior of the filament while single-stranded (ss)DNA is stabiized in the filament's interior. The ATP-DnaA-oriC complex binds and stabilizes one strand of the AT-rich DNA unwinding element (DUE), permitting loading of DNA polymerase. After initiation quickly degrades to an ADP-DnaA complex that is not apt for DNA replication. Binds acidic phospholipids. The protein is Chromosomal replication initiator protein DnaA of Rickettsia bellii (strain RML369-C).